The chain runs to 94 residues: Large ribosomal subunit protein bL31 (94 aa).

Residues 65–94 (YGMADSENDSTDKKKTTNEKKVSDSPSKES) are disordered. The segment covering 74-94 (STDKKKTTNEKKVSDSPSKES) has biased composition (basic and acidic residues).

The protein belongs to the bacterial ribosomal protein bL31 family. Type A subfamily. In terms of assembly, part of the 50S ribosomal subunit.

In terms of biological role, binds the 23S rRNA. The protein is Large ribosomal subunit protein bL31 of Prochlorococcus marinus (strain MIT 9211).